A 462-amino-acid polypeptide reads, in one-letter code: Exodeoxyribonuclease 7 large subunit (462 aa).

Belongs to the XseA family. Heterooligomer composed of large and small subunits.

It localises to the cytoplasm. It catalyses the reaction Exonucleolytic cleavage in either 5'- to 3'- or 3'- to 5'-direction to yield nucleoside 5'-phosphates.. Bidirectionally degrades single-stranded DNA into large acid-insoluble oligonucleotides, which are then degraded further into small acid-soluble oligonucleotides. This is Exodeoxyribonuclease 7 large subunit from Pectobacterium atrosepticum (strain SCRI 1043 / ATCC BAA-672) (Erwinia carotovora subsp. atroseptica).